The sequence spans 255 residues: Acetylglutamate kinase (255 aa).

Substrate-binding positions include 40 to 41 (GG), arginine 62, and asparagine 153.

It belongs to the acetylglutamate kinase family. ArgB subfamily.

It localises to the cytoplasm. The enzyme catalyses N-acetyl-L-glutamate + ATP = N-acetyl-L-glutamyl 5-phosphate + ADP. The protein operates within amino-acid biosynthesis; L-arginine biosynthesis; N(2)-acetyl-L-ornithine from L-glutamate: step 2/4. Functionally, catalyzes the ATP-dependent phosphorylation of N-acetyl-L-glutamate. The chain is Acetylglutamate kinase from Bacillus anthracis (strain CDC 684 / NRRL 3495).